The primary structure comprises 357 residues: DNA replication and repair protein RecF (357 aa).

30–37 (GANGSGKT) contacts ATP.

The protein belongs to the RecF family.

The protein localises to the cytoplasm. The RecF protein is involved in DNA metabolism; it is required for DNA replication and normal SOS inducibility. RecF binds preferentially to single-stranded, linear DNA. It also seems to bind ATP. This is DNA replication and repair protein RecF from Salmonella arizonae (strain ATCC BAA-731 / CDC346-86 / RSK2980).